We begin with the raw amino-acid sequence, 494 residues long: Cytochrome P450 monooxygenase ccsD (494 aa).

The chain crosses the membrane as a helical span at residues 5–25 (ISPRTLVLLAVTCSLLVLYFS). Cys438 contributes to the heme binding site. Residues Asn445 and Asn477 are each glycosylated (N-linked (GlcNAc...) asparagine).

Belongs to the cytochrome P450 family. Heme is required as a cofactor.

Its subcellular location is the membrane. The protein operates within mycotoxin biosynthesis. Cytochrome P450 monooxygenase; part of the gene cluster that mediates the biosynthesis of a family of the mycotoxins cytochalasins E and K. The hybrid PKS-NRPS synthetase ccsA and the enoyl reductase ccsC are responsible for fusion of phenylalanine with an octaketide backbone and subsequent release of the stable tetramic acid precursor. The polyketide synthase module (PKS) of the PKS-NRPS ccsA is responsible for the synthesis of the octaketide backbone. The downstream nonribosomal peptide synthetase (NRPS) amidates the carboxyl end of the octaketide with a phenylalanine. A reductase-like domain (R) at the C-terminus catalyzes the reductive release of the polyketide-amino acid intermediate. Because ccsA lacks a designated enoylreductase (ER) domain, the required activity is provided the enoyl reductase ccsC. Upon formation of the 11-membered carbocycle-fused perhydroisoindolone intermediate, a number of oxidative steps are required to afford the final cytochalasin E and K, including two hydroxylations at C17 and C18, one alcohol oxidation at C17, one epoxidation at C6 and C7 and two Baeyer-Villiger oxidations. The oxidative modification at C17, C18 and the C6-C7 epoxidation are likely to be catalyzed by the two cytochrome P450 oxygenases ccsD and ccsG. CcsD may be responsible for the epoxidation of the C6-C7 double bond. CcsG may be responsible for the successive oxidative modifications at C17 and C18. The double Baeyer-Villiger oxidations of ketocytochalasin to precytochalasin and cytochalasin Z(16) are among the final steps leading to cytochalasin E and K and are catalyzed by ccsB. The first oxygen insertion step follows that of the classic BVMO mechanism, generating the ester precytochalasin. Release of precytochalasin into an aqueous environment can generate the shunt product iso-precytochalasin through spontaneous isomerization. Alternatively, precytochalasin can undergo further oxidation by ccsB to yield the in-line carbonate-containing cytochalasin Z(16). Cytochalasin Z(16) is a precursor to cytochalasin E and cytochalasin K, whereas iso-precytochalasin is a precursor to cytochalasin Z(17) and rosellichalasin. The hydrolyase ccsE may catalyze hydrolysis of epoxide bond in cytochalasin E to afford cytochalasin K. The function of ccsF has not been assigned but it may play a role in post-PKS-NRPS biosynthetic step, resistance or transport of cytochalasins and related PKS-NRPS products. The chain is Cytochrome P450 monooxygenase ccsD from Aspergillus clavatus (strain ATCC 1007 / CBS 513.65 / DSM 816 / NCTC 3887 / NRRL 1 / QM 1276 / 107).